Consider the following 528-residue polypeptide: uncharacterized protein (528 aa).

Basic residues-rich tracts occupy residues 1–16 (MGKA…KNHL) and 25–43 (QLAR…SHTK). Positions 1–59 (MGKASKATKKFTKNHLKNTIERRKQLARSKKVYGTKNRNSHTKNKLESGTNDNNKNKED) are disordered.

Belongs to the NOC2 family.

The protein localises to the nucleus. It localises to the nucleolus. This is an uncharacterized protein from Schizosaccharomyces pombe (strain 972 / ATCC 24843) (Fission yeast).